A 613-amino-acid polypeptide reads, in one-letter code: Zinc finger protein 665 (613 aa).

C2H2-type zinc fingers lie at residues 113–135, 141–163, 169–191, 197–219, 225–247, 253–275, 281–303, 309–331, 337–359, 365–387, 393–415, 421–443, 449–471, 477–499, 505–527, 533–555, 561–583, and 589–611; these read YKCD…KRIH, YRCN…QVIH, YKCN…QRIH, YKCN…QVIH, YKCN…RRIH, YKCN…QTIH, YKCN…RRVH, YKCN…QIIH, FKCN…RRIH, YRCD…QAIH, YKCN…RGIH, YKCD…WRVH, and YRCN…MAIH.

Belongs to the krueppel C2H2-type zinc-finger protein family.

It localises to the nucleus. Functionally, may be involved in transcriptional regulation. The polypeptide is Zinc finger protein 665 (ZNF665) (Pongo abelii (Sumatran orangutan)).